The following is a 478-amino-acid chain: Proline--tRNA ligase (478 aa).

Belongs to the class-II aminoacyl-tRNA synthetase family. ProS type 3 subfamily. As to quaternary structure, homodimer.

The protein resides in the cytoplasm. The catalysed reaction is tRNA(Pro) + L-proline + ATP = L-prolyl-tRNA(Pro) + AMP + diphosphate. Functionally, catalyzes the attachment of proline to tRNA(Pro) in a two-step reaction: proline is first activated by ATP to form Pro-AMP and then transferred to the acceptor end of tRNA(Pro). The sequence is that of Proline--tRNA ligase from Clostridium botulinum (strain ATCC 19397 / Type A).